We begin with the raw amino-acid sequence, 484 residues long: GTPase Obg (484 aa).

The region spanning 7-164 (PRFVDRVVIH…RDLTLELKTV (158 aa)) is the Obg domain. A disordered region spans residues 21–43 (SGGNGCASVHREKFKPLGGPDGG). The region spanning 165-345 (ADVGLVGFPS…LIFGLSQMIS (181 aa)) is the OBG-type G domain. Residues 171–178 (GFPSAGKS), 196–200 (FTTLV), 217–220 (DVPG), 297–300 (NKID), and 326–328 (STA) each bind GTP. Positions 178 and 198 each coordinate Mg(2+). The OCT domain maps to 363-441 (PIPVDDSGFT…IGEMTFDWEP (79 aa)). The segment at 439-484 (WEPQTPAGEPVAMSGRGTDPRLDSNKRVGAAERKAARSRRREHGDG) is disordered. Residues 456-473 (TDPRLDSNKRVGAAERKA) show a composition bias toward basic and acidic residues. A compositionally biased stretch (basic residues) spans 474-484 (ARSRRREHGDG).

Belongs to the TRAFAC class OBG-HflX-like GTPase superfamily. OBG GTPase family. Monomer. Requires Mg(2+) as cofactor.

The protein localises to the cytoplasm. An essential GTPase which binds GTP, GDP and possibly (p)ppGpp with moderate affinity, with high nucleotide exchange rates and a fairly low GTP hydrolysis rate. Plays a role in control of the cell cycle, stress response, ribosome biogenesis and in those bacteria that undergo differentiation, in morphogenesis control. This Mycobacterium tuberculosis (strain CDC 1551 / Oshkosh) protein is GTPase Obg.